The sequence spans 384 residues: Probable circularly permuted 1,3-beta-glucanase PGA52 (384 aa).

Positions 1–17 are cleaved as a signal peptide; the sequence is MLFSSLLVSTLVSVATA. N-linked (GlcNAc...) asparagine glycans are attached at residues Asn-118, Asn-128, Asn-170, Asn-210, and Asn-244. An ExDxxE motif motif is present at residues 254-259; the sequence is EFDIFE. Asn-262 and Asn-318 each carry an N-linked (GlcNAc...) asparagine glycan. Ser-361 carries the GPI-anchor amidated serine lipid modification. The propeptide at 362 to 384 is removed in mature form; it reads GGVSYQPSFITNLLMTVLTLWVI.

It belongs to the PGA52 family.

The protein resides in the cell membrane. It carries out the reaction Hydrolysis of (1-&gt;3)-beta-D-glucosidic linkages in (1-&gt;3)-beta-D-glucans.. Probable circularly permuted 1,3-beta-glucanase involved in cell wall modification through beta-1,3-glucan network alterations such as increased branching or remodeling. This chain is Probable circularly permuted 1,3-beta-glucanase PGA52 (PGA52), found in Candida albicans (strain SC5314 / ATCC MYA-2876) (Yeast).